A 383-amino-acid chain; its full sequence is Probable cell wall hydrolase LytN (383 aa).

An N-terminal signal peptide occupies residues 1–49 (MFVYYCKECFIMNKQQSKVRYSIRKVSIGILSISIGMFLALGMSNKAYA). Residues 175-219 (QIYTVKKGDTLSAIALKYKTTVSNIQNTNNIANPNLIFIGQKLKV) form the LysM domain. One can recognise a Peptidase C51 domain in the interval 241–378 (NSSTLNYLKT…NYENDMIFIR (138 aa)).

It is found in the secreted. Its function is as follows. Probably involved in peptidoglycan hydrolysis. This is Probable cell wall hydrolase LytN (lytN) from Staphylococcus aureus (strain NCTC 8325 / PS 47).